The chain runs to 1077 residues: Carbamoyl phosphate synthase large chain (1077 aa).

Residues 2–403 form a carboxyphosphate synthetic domain region; it reads PKRTDIKSIL…SLQKALRGLE (402 aa). Positions 129, 169, 175, 176, 208, 210, 215, 241, 242, 243, 285, and 299 each coordinate ATP. In terms of domain architecture, ATP-grasp 1 spans 133–328; the sequence is DIAMKKIGLD…IAKIAAKLAV (196 aa). Mg(2+) contacts are provided by Gln285, Glu299, and Asn301. Mn(2+) contacts are provided by Gln285, Glu299, and Asn301. The tract at residues 404–553 is oligomerization domain; it reads VGATGFDPKV…YSTYEEECES (150 aa). The tract at residues 554–936 is carbamoyl phosphate synthetic domain; that stretch reads NPTSDRPKVM…AFSKAMLGSQ (383 aa). Positions 679 to 870 constitute an ATP-grasp 2 domain; the sequence is QQAVNRLGLK…LAKIAARVMV (192 aa). Residues Arg715, Arg754, Leu756, Glu761, Gly786, Val787, His788, Ser789, Gln829, and Glu841 each contribute to the ATP site. Gln829, Glu841, and Asn843 together coordinate Mg(2+). Residues Gln829, Glu841, and Asn843 each contribute to the Mn(2+) site. The region spanning 937–1077 is the MGS-like domain; the sequence is SGMKKSGRAL…MHAKIKNMKA (141 aa). Positions 937–1077 are allosteric domain; that stretch reads SGMKKSGRAL…MHAKIKNMKA (141 aa).

It belongs to the CarB family. Composed of two chains; the small (or glutamine) chain promotes the hydrolysis of glutamine to ammonia, which is used by the large (or ammonia) chain to synthesize carbamoyl phosphate. Tetramer of heterodimers (alpha,beta)4. The cofactor is Mg(2+). It depends on Mn(2+) as a cofactor.

It carries out the reaction hydrogencarbonate + L-glutamine + 2 ATP + H2O = carbamoyl phosphate + L-glutamate + 2 ADP + phosphate + 2 H(+). The catalysed reaction is hydrogencarbonate + NH4(+) + 2 ATP = carbamoyl phosphate + 2 ADP + phosphate + 2 H(+). Its pathway is amino-acid biosynthesis; L-arginine biosynthesis; carbamoyl phosphate from bicarbonate: step 1/1. It functions in the pathway pyrimidine metabolism; UMP biosynthesis via de novo pathway; (S)-dihydroorotate from bicarbonate: step 1/3. Large subunit of the glutamine-dependent carbamoyl phosphate synthetase (CPSase). CPSase catalyzes the formation of carbamoyl phosphate from the ammonia moiety of glutamine, carbonate, and phosphate donated by ATP, constituting the first step of 2 biosynthetic pathways, one leading to arginine and/or urea and the other to pyrimidine nucleotides. The large subunit (synthetase) binds the substrates ammonia (free or transferred from glutamine from the small subunit), hydrogencarbonate and ATP and carries out an ATP-coupled ligase reaction, activating hydrogencarbonate by forming carboxy phosphate which reacts with ammonia to form carbamoyl phosphate. The sequence is that of Carbamoyl phosphate synthase large chain from Yersinia pestis.